Here is a 320-residue protein sequence, read N- to C-terminus: Polyprenal reductase 1 (320 aa).

6 consecutive transmembrane segments (helical) span residues 5 to 25, 64 to 84, 143 to 163, 200 to 220, 243 to 263, and 266 to 286; these read IVWL…LPLV, FFGH…AATW, MHIL…LSLC, PLMK…WGWI, IIPY…AEIV, and LGLL…FGFV.

It belongs to the steroid 5-alpha reductase family. Polyprenal reductase subfamily. As to expression, expressed in roots and flowers.

It localises to the cell membrane. It catalyses the reaction a di-trans,poly-cis-dolichal + NADP(+) = a di-trans,poly-cis-polyprenal + NADPH + H(+). Its pathway is protein modification; protein glycosylation. Plays a key role in early steps of protein N-linked glycosylation by being involved in the conversion of polyprenol into dolichol. Acts as a polyprenal reductase that mediates the reduction of polyprenal into dolichal in a NADP-dependent mechanism. Dolichols are required for the synthesis of dolichol-linked monosaccharides and the oligosaccharide precursor used for N-glycosylation. Involved in the regulation of plant growth and reproductive processes. The chain is Polyprenal reductase 1 from Arabidopsis thaliana (Mouse-ear cress).